We begin with the raw amino-acid sequence, 384 residues long: Omega-6 fatty acid desaturase, endoplasmic reticulum (384 aa).

The disordered stretch occupies residues 1–23 (MGAGGRMQVSPSPKKSETDTLKR). Residues 14 to 23 (KKSETDTLKR) are compositionally biased toward basic and acidic residues. 2 consecutive transmembrane segments (helical) span residues 56–76 (LIWDIIVASCFYYVATTYFPL) and 84–104 (VAWPLYWACQGVVLTGVWVIA). Residues 105–109 (HECGH) carry the Histidine box-1 motif. A helical transmembrane segment spans residues 117 to 137 (WLDDTVGLIFHSFLLVPYFSW). Positions 141–145 (HRRHH) match the Histidine box-2 motif. 3 helical membrane-spanning segments follow: residues 180 to 200 (VMLTVQFTLGWPLYWAFNVSG), 226 to 246 (IYVSDAGILAVCYGLYRYAAA), and 253 to 273 (VCLYGVPLLIVNAFLVLITYL). The Histidine box-3 motif lies at 316-320 (HVAHH).

It belongs to the fatty acid desaturase type 1 family.

The protein localises to the endoplasmic reticulum membrane. It functions in the pathway lipid metabolism; polyunsaturated fatty acid biosynthesis. ER (microsomal) omega-6 fatty acid desaturase introduces the second double bond in the biosynthesis of 18:3 fatty acids, important constituents of plant membranes. It is thought to use cytochrome b5 as an electron donor and to act on fatty acids esterified to phosphatidylcholine and, possibly, other phospholipids. In Brassica juncea (Indian mustard), this protein is Omega-6 fatty acid desaturase, endoplasmic reticulum.